A 1124-amino-acid chain; its full sequence is Eukaryotic translation initiation factor 3 subunit A (1124 aa).

Residues 96–124 (LKMAEERTEQAQQQSSQATVDIDDLDNLA) adopt a coiled-coil conformation. Residues 317–498 (IQRMTTHVLI…ECVHFGTDLS (182 aa)) form the PCI domain. Composition is skewed to basic and acidic residues over residues 812–851 (EERRRIEEELRKQKEEADRIERERRAEERRIQDEKNRQLA) and 860–883 (EVERRRREELEQMKEADGRRERRP). Residues 812–1124 (EERRRIEEEL…EEGWTDVKHR (313 aa)) are disordered. A compositionally biased stretch (low complexity) spans 900–910 (PAAAAPANPAA). Basic and acidic residues-rich tracts occupy residues 928–952 (PRERGGETGPKDKWRTGPEDHEKDG), 960–990 (RGGDMRRGQDDRGPIRRGGGEERGEREDRGP), 1007–1048 (PRRD…RGGG), and 1063–1100 (DDNRRGPRDEGRQDTWRNTRQDAAPKQKEDRPQREARP).

It belongs to the eIF-3 subunit A family. In terms of assembly, component of the eukaryotic translation initiation factor 3 (eIF-3) complex.

Its subcellular location is the cytoplasm. Its function is as follows. RNA-binding component of the eukaryotic translation initiation factor 3 (eIF-3) complex, which is involved in protein synthesis of a specialized repertoire of mRNAs and, together with other initiation factors, stimulates binding of mRNA and methionyl-tRNAi to the 40S ribosome. The eIF-3 complex specifically targets and initiates translation of a subset of mRNAs involved in cell proliferation. This chain is Eukaryotic translation initiation factor 3 subunit A, found in Anopheles gambiae (African malaria mosquito).